The primary structure comprises 391 residues: Transforming growth factor beta-1 proprotein (391 aa).

A signal peptide spans 1–18 (MDPSPLLALLLLLGAARA). Residues 19–63 (LSTCQRLDLEAAKKKRIEAVRGQILSKLRLTAPPPASETPPRPLP) form a straightjacket domain region. An arm domain region spans residues 64 to 270 (DDVRALYNST…ALPAERANEL (207 aa)). N-linked (GlcNAc...) asparagine glycosylation is found at Asn-71, Asn-126, and Asn-171. The segment at 221-249 (EMGPGHADEMRISIEGFEQQRGDMQSIAK) is bowtie tail. The Cell attachment site motif lies at 241-243 (RGD). 4 disulfides stabilise this stretch: Cys-284-Cys-295, Cys-294-Cys-357, Cys-323-Cys-388, and Cys-327-Cys-390.

It belongs to the TGF-beta family. Latency-associated peptide: Homodimer; disulfide-linked. Latency-associated peptide: Interacts with Transforming growth factor beta-1 (TGF-beta-1) chain; interaction is non-covalent and maintains (TGF-beta-1) in a latent state; each Latency-associated peptide (LAP) monomer interacts with TGF-beta-1 in the other monomer. Transforming growth factor beta-1: Homodimer; disulfide-linked. Transforming growth factor beta-1: Interacts with TGF-beta receptors (TGFBR1 and TGFBR2), leading to signal transduction. Transforming growth factor beta-1 proprotein: The precursor proprotein is cleaved in the Golgi apparatus to form Transforming growth factor beta-1 (TGF-beta-1) and Latency-associated peptide (LAP) chains, which remain non-covalently linked, rendering TGF-beta-1 inactive.

It localises to the secreted. The protein resides in the extracellular space. Its subcellular location is the extracellular matrix. In terms of biological role, transforming growth factor beta-1 proprotein: Precursor of the Latency-associated peptide (LAP) and Transforming growth factor beta-1 (TGF-beta-1) chains, which constitute the regulatory and active subunit of TGF-beta-1, respectively. Functionally, required to maintain the Transforming growth factor beta-1 (TGF-beta-1) chain in a latent state during storage in extracellular matrix. Associates non-covalently with TGF-beta-1 and regulates its activation via interaction with 'milieu molecules', such as LTBP1, LRRC32/GARP and LRRC33/NRROS, that control activation of TGF-beta-1. Interaction with integrins (ITGAV:ITGB6 or ITGAV:ITGB8) results in distortion of the Latency-associated peptide chain and subsequent release of the active TGF-beta-1. Its function is as follows. Transforming growth factor beta-1: Multifunctional protein that regulates the growth and differentiation of various cell types and is involved in various processes, such as normal development, immune function, microglia function and responses to neurodegeneration. Activation into mature form follows different steps: following cleavage of the proprotein in the Golgi apparatus, Latency-associated peptide (LAP) and Transforming growth factor beta-1 (TGF-beta-1) chains remain non-covalently linked rendering TGF-beta-1 inactive during storage in extracellular matrix. At the same time, LAP chain interacts with 'milieu molecules', such as LTBP1, LRRC32/GARP and LRRC33/NRROS that control activation of TGF-beta-1 and maintain it in a latent state during storage in extracellular milieus. TGF-beta-1 is released from LAP by integrins (ITGAV:ITGB6 or ITGAV:ITGB8): integrin-binding to LAP stabilizes an alternative conformation of the LAP bowtie tail and results in distortion of the LAP chain and subsequent release of the active TGF-beta-1. Once activated following release of LAP, TGF-beta-1 acts by binding to TGF-beta receptors (TGFBR1 and TGFBR2), which transduce signal. While expressed by many cells types, TGF-beta-1 only has a very localized range of action within cell environment thanks to fine regulation of its activation by Latency-associated peptide chain (LAP) and 'milieu molecules'. Plays an important role in bone remodeling: acts as a potent stimulator of osteoblastic bone formation. Can promote either T-helper 17 cells (Th17) or regulatory T-cells (Treg) lineage differentiation in a concentration-dependent manner. Can induce epithelial-to-mesenchymal transition (EMT) and cell migration in various cell types. This is Transforming growth factor beta-1 proprotein (TGFB1) from Gallus gallus (Chicken).